The chain runs to 131 residues: Large ribosomal subunit protein bL17 (131 aa).

The protein belongs to the bacterial ribosomal protein bL17 family. Part of the 50S ribosomal subunit. Contacts protein L32.

This is Large ribosomal subunit protein bL17 from Thermotoga neapolitana (strain ATCC 49049 / DSM 4359 / NBRC 107923 / NS-E).